Here is a 225-residue protein sequence, read N- to C-terminus: Urease accessory protein UreG (225 aa).

25 to 32 contributes to the GTP binding site; that stretch reads GPVGAGKT.

It belongs to the SIMIBI class G3E GTPase family. UreG subfamily. Homodimer. UreD, UreF and UreG form a complex that acts as a GTP-hydrolysis-dependent molecular chaperone, activating the urease apoprotein by helping to assemble the nickel containing metallocenter of UreC. The UreE protein probably delivers the nickel.

The protein localises to the cytoplasm. Functionally, facilitates the functional incorporation of the urease nickel metallocenter. This process requires GTP hydrolysis, probably effectuated by UreG. In Haemophilus influenzae (strain 86-028NP), this protein is Urease accessory protein UreG.